Here is a 364-residue protein sequence, read N- to C-terminus: Dual-specificity RNA methyltransferase RlmN (364 aa).

Glu-91 acts as the Proton acceptor in catalysis. One can recognise a Radical SAM core domain in the interval 102-337 (GTLRITQCLS…AIIRKSKGQD (236 aa)). Cys-109 and Cys-342 are joined by a disulfide. [4Fe-4S] cluster is bound by residues Cys-116, Cys-120, and Cys-123. S-adenosyl-L-methionine is bound by residues 169–170 (GE), Ser-201, 223–225 (SLH), and Asn-299. Cys-342 acts as the S-methylcysteine intermediate in catalysis.

The protein belongs to the radical SAM superfamily. RlmN family. Requires [4Fe-4S] cluster as cofactor.

It is found in the cytoplasm. It catalyses the reaction adenosine(2503) in 23S rRNA + 2 reduced [2Fe-2S]-[ferredoxin] + 2 S-adenosyl-L-methionine = 2-methyladenosine(2503) in 23S rRNA + 5'-deoxyadenosine + L-methionine + 2 oxidized [2Fe-2S]-[ferredoxin] + S-adenosyl-L-homocysteine. The catalysed reaction is adenosine(37) in tRNA + 2 reduced [2Fe-2S]-[ferredoxin] + 2 S-adenosyl-L-methionine = 2-methyladenosine(37) in tRNA + 5'-deoxyadenosine + L-methionine + 2 oxidized [2Fe-2S]-[ferredoxin] + S-adenosyl-L-homocysteine. In terms of biological role, specifically methylates position 2 of adenine 2503 in 23S rRNA and position 2 of adenine 37 in tRNAs. m2A2503 modification seems to play a crucial role in the proofreading step occurring at the peptidyl transferase center and thus would serve to optimize ribosomal fidelity. The chain is Dual-specificity RNA methyltransferase RlmN from Nitratidesulfovibrio vulgaris (strain DP4) (Desulfovibrio vulgaris).